We begin with the raw amino-acid sequence, 269 residues long: Putative pyruvate, phosphate dikinase regulatory protein (269 aa).

151–158 (GISRTSKT) provides a ligand contact to ADP.

It belongs to the pyruvate, phosphate/water dikinase regulatory protein family. PDRP subfamily.

It catalyses the reaction N(tele)-phospho-L-histidyl/L-threonyl-[pyruvate, phosphate dikinase] + ADP = N(tele)-phospho-L-histidyl/O-phospho-L-threonyl-[pyruvate, phosphate dikinase] + AMP + H(+). The catalysed reaction is N(tele)-phospho-L-histidyl/O-phospho-L-threonyl-[pyruvate, phosphate dikinase] + phosphate + H(+) = N(tele)-phospho-L-histidyl/L-threonyl-[pyruvate, phosphate dikinase] + diphosphate. In terms of biological role, bifunctional serine/threonine kinase and phosphorylase involved in the regulation of the pyruvate, phosphate dikinase (PPDK) by catalyzing its phosphorylation/dephosphorylation. This chain is Putative pyruvate, phosphate dikinase regulatory protein, found in Staphylococcus aureus.